We begin with the raw amino-acid sequence, 274 residues long: tRNA-cytidine(32) 2-sulfurtransferase (274 aa).

Positions 40-45 (SGGKDS) match the PP-loop motif motif. The [4Fe-4S] cluster site is built by Cys115, Cys118, and Cys206.

It belongs to the TtcA family. In terms of assembly, homodimer. Mg(2+) is required as a cofactor. Requires [4Fe-4S] cluster as cofactor.

It localises to the cytoplasm. The catalysed reaction is cytidine(32) in tRNA + S-sulfanyl-L-cysteinyl-[cysteine desulfurase] + AH2 + ATP = 2-thiocytidine(32) in tRNA + L-cysteinyl-[cysteine desulfurase] + A + AMP + diphosphate + H(+). It participates in tRNA modification. Its function is as follows. Catalyzes the ATP-dependent 2-thiolation of cytidine in position 32 of tRNA, to form 2-thiocytidine (s(2)C32). The sulfur atoms are provided by the cysteine/cysteine desulfurase (IscS) system. The chain is tRNA-cytidine(32) 2-sulfurtransferase from Pseudomonas aeruginosa (strain LESB58).